The chain runs to 338 residues: Glycerol-3-phosphate dehydrogenase [NAD(P)+] (338 aa).

The NADPH site is built by serine 13, tryptophan 14, and lysine 108. Sn-glycerol 3-phosphate is bound by residues lysine 108, glycine 139, and serine 141. Position 143 (alanine 143) interacts with NADPH. Sn-glycerol 3-phosphate is bound by residues lysine 194, aspartate 247, serine 257, arginine 258, and asparagine 259. Lysine 194 serves as the catalytic Proton acceptor. Arginine 258 contributes to the NADPH binding site. Residues valine 282 and glutamate 284 each contribute to the NADPH site.

The protein belongs to the NAD-dependent glycerol-3-phosphate dehydrogenase family.

It is found in the cytoplasm. It carries out the reaction sn-glycerol 3-phosphate + NAD(+) = dihydroxyacetone phosphate + NADH + H(+). The catalysed reaction is sn-glycerol 3-phosphate + NADP(+) = dihydroxyacetone phosphate + NADPH + H(+). Its pathway is membrane lipid metabolism; glycerophospholipid metabolism. Functionally, catalyzes the reduction of the glycolytic intermediate dihydroxyacetone phosphate (DHAP) to sn-glycerol 3-phosphate (G3P), the key precursor for phospholipid synthesis. The polypeptide is Glycerol-3-phosphate dehydrogenase [NAD(P)+] (Listeria innocua serovar 6a (strain ATCC BAA-680 / CLIP 11262)).